Here is a 53-residue protein sequence, read N- to C-terminus: uncharacterized protein (53 aa).

A helical membrane pass occupies residues 4–24 (FILLIVGFIYGAGGVLLYSVY).

The protein localises to the host membrane. This is an uncharacterized protein from Acidianus bottle-shaped virus (isolate Italy/Pozzuoli) (ABV).